Consider the following 88-residue polypeptide: Large ribosomal subunit protein bL31B (88 aa).

Belongs to the bacterial ribosomal protein bL31 family. Type B subfamily. In terms of assembly, part of the 50S ribosomal subunit.

This Corynebacterium diphtheriae (strain ATCC 700971 / NCTC 13129 / Biotype gravis) protein is Large ribosomal subunit protein bL31B.